The following is a 429-amino-acid chain: Probable M18 family aminopeptidase 2 (429 aa).

Residues His-82, His-156, and His-401 each coordinate Zn(2+).

The protein belongs to the peptidase M18 family. Requires Zn(2+) as cofactor.

This chain is Probable M18 family aminopeptidase 2, found in Pseudomonas aeruginosa (strain UCBPP-PA14).